A 280-amino-acid polypeptide reads, in one-letter code: Secreted RxLR effector protein 39 (280 aa).

The N-terminal stretch at 1–19 (MRGAYYVAIALLIVASCSA) is a signal peptide. The short motif at 49–70 (RVLRGSRDLKNKWAVHAGGEDR) is the RxLR-dEER element. The segment at 229–249 (EVKARSSKRQRTNPMLNNMDG) is disordered.

It belongs to the RxLR effector family.

Its subcellular location is the secreted. The protein resides in the host nucleus. Its function is as follows. Secreted effector that completely suppresses the host cell death induced by cell death-inducing proteins. This is Secreted RxLR effector protein 39 from Plasmopara viticola (Downy mildew of grapevine).